We begin with the raw amino-acid sequence, 330 residues long: DNA-directed RNA polymerase subunit alpha (330 aa).

The interval 1–225 is alpha N-terminal domain (alpha-NTD); it reads MSDLAIPTIS…KQFASLVSHS (225 aa). Residues 237–330 form an alpha C-terminal domain (alpha-CTD) region; it reads VKYTIPEEKY…KKKNKGIDED (94 aa).

The protein belongs to the RNA polymerase alpha chain family. Homodimer. The RNAP catalytic core consists of 2 alpha, 1 beta, 1 beta' and 1 omega subunit. When a sigma factor is associated with the core the holoenzyme is formed, which can initiate transcription.

It carries out the reaction RNA(n) + a ribonucleoside 5'-triphosphate = RNA(n+1) + diphosphate. In terms of biological role, DNA-dependent RNA polymerase catalyzes the transcription of DNA into RNA using the four ribonucleoside triphosphates as substrates. The polypeptide is DNA-directed RNA polymerase subunit alpha (Dehalococcoides mccartyi (strain CBDB1)).